Consider the following 172-residue polypeptide: 3-hydroxydecanoyl-[acyl-carrier-protein] dehydratase (172 aa).

Residue histidine 71 is part of the active site.

Belongs to the thioester dehydratase family. FabA subfamily. As to quaternary structure, homodimer.

The protein resides in the cytoplasm. It carries out the reaction a (3R)-hydroxyacyl-[ACP] = a (2E)-enoyl-[ACP] + H2O. The catalysed reaction is (3R)-hydroxydecanoyl-[ACP] = (2E)-decenoyl-[ACP] + H2O. It catalyses the reaction (2E)-decenoyl-[ACP] = (3Z)-decenoyl-[ACP]. It participates in lipid metabolism; fatty acid biosynthesis. Its function is as follows. Necessary for the introduction of cis unsaturation into fatty acids. Catalyzes the dehydration of (3R)-3-hydroxydecanoyl-ACP to E-(2)-decenoyl-ACP and then its isomerization to Z-(3)-decenoyl-ACP. Can catalyze the dehydratase reaction for beta-hydroxyacyl-ACPs with saturated chain lengths up to 16:0, being most active on intermediate chain length. In Photorhabdus laumondii subsp. laumondii (strain DSM 15139 / CIP 105565 / TT01) (Photorhabdus luminescens subsp. laumondii), this protein is 3-hydroxydecanoyl-[acyl-carrier-protein] dehydratase.